The chain runs to 152 residues: UPF0178 protein SAR0734 (152 aa).

The protein belongs to the UPF0178 family.

In Staphylococcus aureus (strain MRSA252), this protein is UPF0178 protein SAR0734.